A 174-amino-acid chain; its full sequence is Glyoxylase I 4 (174 aa).

In terms of domain architecture, VOC spans 13 to 135 (SLNHVSVLCR…DGFMIEICNC (123 aa)). Catalysis depends on E131, which acts as the Proton donor/acceptor.

Belongs to the glyoxalase I family. Mostly expressed in roots, and, to a lower extent, in leaves, flowers, seeds and siliques.

It localises to the cell membrane. The protein localises to the cytoplasm. In terms of biological role, involved in the detoxification and scavenging of methylglyoxal (MG), a cytotoxic aldehyde produced in response to primary metabolism alteration observed during biotic and abiotic stresses. Modulates cross-talk between salicylic acid (SA) and jasmonic acid (JA) signaling pathways during defense responses to pathogens such as Botrytis cinerea. The polypeptide is Glyoxylase I 4 (Arabidopsis thaliana (Mouse-ear cress)).